The sequence spans 81 residues: Photosystem I iron-sulfur center (81 aa).

2 consecutive 4Fe-4S ferredoxin-type domains span residues 2–31 (AHSVKIYDTCIGCTQCVRACPTDVLEMIPW) and 39–68 (IASAPRTEDCVGCKRCESACPTDFLSVRVY). [4Fe-4S] cluster-binding residues include cysteine 11, cysteine 14, cysteine 17, cysteine 21, cysteine 48, cysteine 51, cysteine 54, and cysteine 58.

The eukaryotic PSI reaction center is composed of at least 11 subunits. Requires [4Fe-4S] cluster as cofactor.

The protein resides in the plastid. Its subcellular location is the chloroplast thylakoid membrane. It carries out the reaction reduced [plastocyanin] + hnu + oxidized [2Fe-2S]-[ferredoxin] = oxidized [plastocyanin] + reduced [2Fe-2S]-[ferredoxin]. Functionally, apoprotein for the two 4Fe-4S centers FA and FB of photosystem I (PSI); essential for photochemical activity. FB is the terminal electron acceptor of PSI, donating electrons to ferredoxin. The C-terminus interacts with PsaA/B/D and helps assemble the protein into the PSI complex. Required for binding of PsaD and PsaE to PSI. PSI is a plastocyanin-ferredoxin oxidoreductase, converting photonic excitation into a charge separation, which transfers an electron from the donor P700 chlorophyll pair to the spectroscopically characterized acceptors A0, A1, FX, FA and FB in turn. The sequence is that of Photosystem I iron-sulfur center from Psilotum nudum (Whisk fern).